The sequence spans 335 residues: 2-acylglycerol O-acyltransferase 2-A (335 aa).

Helical transmembrane passes span 24–44 and 47–67; these read WVFSFLALAQTCILLFFVLLF and FWIISVVYGVWWFLDWDTPSK.

It belongs to the diacylglycerol acyltransferase family.

The protein resides in the endoplasmic reticulum membrane. It localises to the cytoplasm. The protein localises to the perinuclear region. It catalyses the reaction a 2-acylglycerol + an acyl-CoA = a 1,2-diacylglycerol + CoA. The enzyme catalyses a 2-acylglycerol + an acyl-CoA = a 1,2-diacyl-sn-glycerol + CoA. It carries out the reaction a 2-acylglycerol + an acyl-CoA = a 2,3-diacyl-sn-glycerol + CoA. The catalysed reaction is a 1-acylglycerol + an acyl-CoA = a 1,2-diacylglycerol + CoA. It catalyses the reaction a 1-acylglycerol + an acyl-CoA = a 1,3-diacylglycerol + CoA. The enzyme catalyses 1-O-alkylglycerol + an acyl-CoA = 1-O-alkyl-3-acylglycerol + CoA. It carries out the reaction an acyl-CoA + a 1,2-diacyl-sn-glycerol = a triacyl-sn-glycerol + CoA. Its pathway is glycerolipid metabolism; triacylglycerol biosynthesis. Functionally, catalyzes the formation of diacylglycerol from 2-monoacylglycerol and fatty acyl-CoA. Involved in glycerolipid synthesis and lipid metabolism. Catalyzes the formation of diacylglycerol, the precursor of triacylglycerol, by transferring the acyl chain of a fatty acyl-CoA to a monoacylglycerol. Plays a central role in absorption of dietary fat in the small intestine by catalyzing the resynthesis of triacylglycerol in enterocytes. Has a preference toward monoacylglycerols containing unsaturated fatty acids in an order of C18:3 &gt; C18:2 &gt; C18:1 &gt; C18:0 at sn-2. Able to use 1-monoalkylglycerol (1-MAkG, 1-O-alkylglycerol) as an acyl acceptor for the synthesis of monoalkyl-monoacylglycerol (MAMAG, 1-O-alkyl-3-acylglycerol or 1-O-alkyl-2-acylglycerol) and subsequently, with lower efficiency, may add another acyl chain producing monoalkyl-diacylglycerol (MADAG, 1-O-alkyl-2,3-diacylglycerol). Possesses weak but significant activity with diacylglycerol as substrate, producing triacylglycerol (triacyl-sn-glycerol). The protein is 2-acylglycerol O-acyltransferase 2-A (mogat2-a) of Xenopus laevis (African clawed frog).